A 294-amino-acid polypeptide reads, in one-letter code: ATP phosphoribosyltransferase (294 aa).

It belongs to the ATP phosphoribosyltransferase family. Long subfamily. Requires Mg(2+) as cofactor.

Its subcellular location is the cytoplasm. The enzyme catalyses 1-(5-phospho-beta-D-ribosyl)-ATP + diphosphate = 5-phospho-alpha-D-ribose 1-diphosphate + ATP. It participates in amino-acid biosynthesis; L-histidine biosynthesis; L-histidine from 5-phospho-alpha-D-ribose 1-diphosphate: step 1/9. Feedback inhibited by histidine. In terms of biological role, catalyzes the condensation of ATP and 5-phosphoribose 1-diphosphate to form N'-(5'-phosphoribosyl)-ATP (PR-ATP). Has a crucial role in the pathway because the rate of histidine biosynthesis seems to be controlled primarily by regulation of HisG enzymatic activity. This chain is ATP phosphoribosyltransferase, found in Chlorobium chlorochromatii (strain CaD3).